A 58-amino-acid chain; its full sequence is UPF0339 protein Msl4696 (58 aa).

This sequence belongs to the UPF0339 family.

The polypeptide is UPF0339 protein Msl4696 (Mesorhizobium japonicum (strain LMG 29417 / CECT 9101 / MAFF 303099) (Mesorhizobium loti (strain MAFF 303099))).